A 1217-amino-acid polypeptide reads, in one-letter code: Splicing factor 3B subunit 3 (1217 aa).

2 interaction with PHF5A, SF3B1 and SF3B5 regions span residues 105–119 (ETFG…VPGQ) and 145–168 (NRDA…TLVY). S156 carries the post-translational modification Phosphoserine. Interaction with SF3B1 and SF3B5 stretches follow at residues 193 to 231 (DNDP…LEEH) and 786 to 804 (RKFV…ETDH). Positions 1028–1049 (TYPRWVTTASLLDYDTVAGADK) are interaction with SF3B1. The tract at residues 1100–1123 (TVLSLQKTTLIPGGSESLVYTTLS) is interaction with SF3B5. T1200 bears the Phosphothreonine mark.

Belongs to the RSE1 family. Component of the 17S U2 SnRNP complex, a ribonucleoprotein complex that contains small nuclear RNA (snRNA) U2 and a number of specific proteins. Part of the SF3B subcomplex of the 17S U2 SnRNP complex. SF3B associates with the splicing subcomplex SF3A and a 12S RNA unit to form the U2 small nuclear ribonucleoproteins complex (U2 snRNP). Within the SF3B subcomplex, interacts directly with SF3B1 (via HEAT domain), SF3B5 and PHF5A. Identified in the spliceosome A complex; remains associated with the spliceosome throughout the splicing process. Component of the spliceosome B complex. Identified in the spliceosome C complex. Identified in the spliceosome E complex. Component of the minor (U12-type spliceosome) spliceosome. Within this complex, interacts with SCNM1. Associates with the STAGA transcription coactivator-HAT complex. Interacts with SUPT3H. Interacts with TAF3.

The protein resides in the nucleus. Component of the 17S U2 SnRNP complex of the spliceosome, a large ribonucleoprotein complex that removes introns from transcribed pre-mRNAs. The 17S U2 SnRNP complex (1) directly participates in early spliceosome assembly and (2) mediates recognition of the intron branch site during pre-mRNA splicing by promoting the selection of the pre-mRNA branch-site adenosine, the nucleophile for the first step of splicing. Within the 17S U2 SnRNP complex, SF3B3 is part of the SF3B subcomplex, which is required for 'A' complex assembly formed by the stable binding of U2 snRNP to the branchpoint sequence in pre-mRNA. Sequence independent binding of SF3A and SF3B subcomplexes upstream of the branch site is essential, it may anchor U2 snRNP to the pre-mRNA. May also be involved in the assembly of the 'E' complex. Also acts as a component of the minor spliceosome, which is involved in the splicing of U12-type introns in pre-mRNAs. The sequence is that of Splicing factor 3B subunit 3 (SF3B3) from Pongo abelii (Sumatran orangutan).